The sequence spans 480 residues: uncharacterized protein (480 aa).

The disordered stretch occupies residues 1–20 (MDVKDTGINRSDTPISDQDH).

This is an uncharacterized protein from Arabidopsis thaliana (Mouse-ear cress).